The primary structure comprises 423 residues: Large ribosomal subunit protein mL37 (423 aa).

The transit peptide at M1–G29 directs the protein to the mitochondrion.

Belongs to the mitochondrion-specific ribosomal protein mL37 family. In terms of assembly, component of the mitochondrial large ribosomal subunit (mt-LSU). Mature mammalian 55S mitochondrial ribosomes consist of a small (28S) and a large (39S) subunit. The 28S small subunit contains a 12S ribosomal RNA (12S mt-rRNA) and 30 different proteins. The 39S large subunit contains a 16S rRNA (16S mt-rRNA), a copy of mitochondrial valine transfer RNA (mt-tRNA(Val)), which plays an integral structural role, and 52 different proteins. mL37 forms a heterodimer with mL65.

Its subcellular location is the mitochondrion. The polypeptide is Large ribosomal subunit protein mL37 (MRPL37) (Homo sapiens (Human)).